Consider the following 229-residue polypeptide: Cytidylate kinase (229 aa).

15-23 is an ATP binding site; that stretch reads GPAASGKST.

This sequence belongs to the cytidylate kinase family. Type 1 subfamily.

The protein resides in the cytoplasm. It carries out the reaction CMP + ATP = CDP + ADP. It catalyses the reaction dCMP + ATP = dCDP + ADP. In Herpetosiphon aurantiacus (strain ATCC 23779 / DSM 785 / 114-95), this protein is Cytidylate kinase.